The following is a 335-amino-acid chain: Mevalonate kinase (335 aa).

111-121 contributes to the ATP binding site; it reads PVGAGLGSSAA. Asp-162 functions as the Proton acceptor in the catalytic mechanism.

It belongs to the GHMP kinase family. Mevalonate kinase subfamily. As to quaternary structure, homodimer. Mg(2+) is required as a cofactor.

Its subcellular location is the cytoplasm. The catalysed reaction is (R)-mevalonate + ATP = (R)-5-phosphomevalonate + ADP + H(+). Its pathway is isoprenoid biosynthesis; isopentenyl diphosphate biosynthesis via mevalonate pathway; isopentenyl diphosphate from (R)-mevalonate: step 1/3. Its function is as follows. Catalyzes the phosphorylation of (R)-mevalonate (MVA) to (R)-mevalonate 5-phosphate (MVAP). Functions in the mevalonate (MVA) pathway leading to isopentenyl diphosphate (IPP), a key precursor for the biosynthesis of isoprenoid compounds such as archaeal membrane lipids. This is Mevalonate kinase from Pyrococcus abyssi (strain GE5 / Orsay).